The primary structure comprises 388 residues: Flap endonuclease 1 (388 aa).

Residues Met1–Arg104 form an N-domain region. Asp34 is a Mg(2+) binding site. Residues Arg47 and Arg70 each contribute to the DNA site. Mg(2+)-binding residues include Asp86, Glu158, Glu160, Asp179, and Asp181. The segment at Glu122 to Tyr253 is I-domain. Glu158 is a binding site for DNA. Residues Gly231 and Asp233 each coordinate DNA. Asp233 serves as a coordination point for Mg(2+). Positions Thr336–Phe344 are interaction with PCNA. The interval Pro351–Lys388 is disordered.

Belongs to the XPG/RAD2 endonuclease family. FEN1 subfamily. In terms of assembly, interacts with PCNA. Three molecules of FEN1 bind to one PCNA trimer with each molecule binding to one PCNA monomer. PCNA stimulates the nuclease activity without altering cleavage specificity. Mg(2+) is required as a cofactor. Phosphorylated. Phosphorylation upon DNA damage induces relocalization to the nuclear plasma.

Its subcellular location is the nucleus. It is found in the nucleolus. The protein resides in the nucleoplasm. It localises to the mitochondrion. Its function is as follows. Structure-specific nuclease with 5'-flap endonuclease and 5'-3' exonuclease activities involved in DNA replication and repair. During DNA replication, cleaves the 5'-overhanging flap structure that is generated by displacement synthesis when DNA polymerase encounters the 5'-end of a downstream Okazaki fragment. It enters the flap from the 5'-end and then tracks to cleave the flap base, leaving a nick for ligation. Also involved in the long patch base excision repair (LP-BER) pathway, by cleaving within the apurinic/apyrimidinic (AP) site-terminated flap. Acts as a genome stabilization factor that prevents flaps from equilibrating into structures that lead to duplications and deletions. Also possesses 5'-3' exonuclease activity on nicked or gapped double-stranded DNA, and exhibits RNase H activity. Also involved in replication and repair of rDNA and in repairing mitochondrial DNA. The sequence is that of Flap endonuclease 1 from Drosophila mojavensis (Fruit fly).